Reading from the N-terminus, the 381-residue chain is Dynactin subunit 2 (381 aa).

The disordered stretch occupies residues 15 to 39 (DQPDVYETPDAPESETSDFYDEEPA). Residues 24–39 (DAPESETSDFYDEEPA) are compositionally biased toward acidic residues. 2 coiled-coil regions span residues 100-216 (QKCL…AVGA) and 350-381 (GVQE…EKVK).

Belongs to the dynactin subunit 2 family. In terms of assembly, subunit of dynactin, a multiprotein complex associated with dynein.

Its subcellular location is the cytoplasm. It localises to the cytoskeleton. The protein localises to the membrane. Functionally, modulates cytoplasmic dynein binding to an organelle, and plays a role in prometaphase chromosome alignment and spindle organization during mitosis. The polypeptide is Dynactin subunit 2 (Aedes aegypti (Yellowfever mosquito)).